The sequence spans 497 residues: Delayed-rectifier potassium channel regulatory subunit KCNS1 (497 aa).

Residues 1-186 (MVSEFPGPGS…LTMENPGYSL (186 aa)) lie on the Cytoplasmic side of the membrane. The chain crosses the membrane as a helical span at residues 187–208 (PSKLFSCVSIGVVLASIAAMCI). Over 209–239 (HSLPEYQAREAAAAVAAVAAGRSAEEVRDDP) the chain is Extracellular. A helical membrane pass occupies residues 240-262 (VLRRLEYFCIAWFSFEVSSRLLL). Residues 263–273 (APSTRNFFCHP) lie on the Cytoplasmic side of the membrane. A helical transmembrane segment spans residues 274-291 (LNLIDIVSVLPFYLTLLA). At 292–309 (GAALGDQRGASGEELGDL) the chain is on the extracellular side. A helical; Voltage-sensor membrane pass occupies residues 310–330 (GKVVQVFRLMRIFRVLKLARH). At 331–345 (STGLRSLGATLKHSY) the chain is on the cytoplasmic side. A helical membrane pass occupies residues 346 to 367 (REVGILLLYLAVGVSVFSGVAY). At 368-379 (TAEEENEGFHTI) the chain is on the extracellular side. An intramembrane region (helical) is located at residues 380 to 391 (PACWWWGTVSMT). The Selectivity filter signature appears at 392–397 (TVGYGD). The stretch at 392–399 (TVGYGDVV) is an intramembrane region. The Extracellular segment spans residues 400-406 (PETVGGK). A helical membrane pass occupies residues 407–435 (LAASGCILGGILVVALPITIIFNKFSHFY). The Cytoplasmic segment spans residues 436 to 497 (RRQKALEAAV…PREPAKSHSY (62 aa)). Residues 464–497 (SDVSLETSRDTSQEGRSTDLETQAPREPAKSHSY) are disordered. The span at 470 to 482 (TSRDTSQEGRSTD) shows a compositional bias: basic and acidic residues.

It belongs to the potassium channel family. S (TC 1.A.1.2) subfamily. Kv9.1/KCNS1 sub-subfamily. Heterotetramer with KCNB1 and KCNB2. Does not form homomultimers. Detected in brain, but not in the other tissues tested. The highest levels of expression are in olfactory bulb, cerebral cortex, hippocampus, habenula, basolateral amygdaloid nuclei and cerebellum.

It is found in the cell membrane. Its function is as follows. Potassium channel regulatory subunit that modulate the delayed rectifier voltage-gated potassium channel activity of KCNB1 and KCNB2 by altering their kinetics, expression levels, and shifting the half-inactivation potential to more polarized values. While it does not form functional channels on its own, it can form functional heterotetrameric channels with KCNB1 and KCNB2. Each regulatory subunit has unique regulatory properties that can lead to extensive inhibition, significant changes in kinetics, and/or substantial shifts in the voltage dependencies of the inactivation process. This Mus musculus (Mouse) protein is Delayed-rectifier potassium channel regulatory subunit KCNS1.